Reading from the N-terminus, the 513-residue chain is Histidine ammonia-lyase (513 aa).

The segment at residues 144 to 146 is a cross-link (5-imidazolinone (Ala-Gly)); the sequence is ASG. Position 145 is a 2,3-didehydroalanine (Ser) (Ser145).

It belongs to the PAL/histidase family. Post-translationally, contains an active site 4-methylidene-imidazol-5-one (MIO), which is formed autocatalytically by cyclization and dehydration of residues Ala-Ser-Gly.

The protein localises to the cytoplasm. It carries out the reaction L-histidine = trans-urocanate + NH4(+). The protein operates within amino-acid degradation; L-histidine degradation into L-glutamate; N-formimidoyl-L-glutamate from L-histidine: step 1/3. The sequence is that of Histidine ammonia-lyase from Streptococcus pyogenes serotype M6 (strain ATCC BAA-946 / MGAS10394).